A 374-amino-acid polypeptide reads, in one-letter code: Alcohol dehydrogenase class-3 (374 aa).

Residue alanine 2 is modified to N-acetylalanine. Zn(2+) is bound by residues cysteine 45, histidine 67, cysteine 97, cysteine 100, cysteine 103, cysteine 111, and cysteine 174. An N6-succinyllysine modification is found at lysine 233. Serine 247 is subject to Phosphoserine. Lysine 315 carries the post-translational modification N6-succinyllysine. Phosphoserine occurs at positions 324 and 351.

Belongs to the zinc-containing alcohol dehydrogenase family. Class-III subfamily. In terms of assembly, homodimer. Zn(2+) is required as a cofactor.

The protein localises to the cytoplasm. It carries out the reaction a primary alcohol + NAD(+) = an aldehyde + NADH + H(+). The catalysed reaction is a secondary alcohol + NAD(+) = a ketone + NADH + H(+). The enzyme catalyses S-(hydroxymethyl)glutathione + NADP(+) = S-formylglutathione + NADPH + H(+). It catalyses the reaction S-(hydroxymethyl)glutathione + NAD(+) = S-formylglutathione + NADH + H(+). It carries out the reaction 20-oxo-(5Z,8Z,11Z,14Z)-eicosatetraenoate + NAD(+) + H2O = (5Z,8Z,11Z,14Z)-eicosatetraenedioate + NADH + 2 H(+). The catalysed reaction is 20-hydroxy-(5Z,8Z,11Z,14Z)-eicosatetraenoate + NAD(+) = 20-oxo-(5Z,8Z,11Z,14Z)-eicosatetraenoate + NADH + H(+). The enzyme catalyses S-nitrosoglutathione + NADH + H(+) = S-(hydroxysulfenamide)glutathione + NAD(+). In terms of biological role, catalyzes the oxidation of long-chain primary alcohols and the oxidation of S-(hydroxymethyl) glutathione. Also oxidizes long chain omega-hydroxy fatty acids, such as 20-HETE, producing both the intermediate aldehyde, 20-oxoarachidonate and the end product, a dicarboxylic acid, (5Z,8Z,11Z,14Z)-eicosatetraenedioate. Class-III ADH is remarkably ineffective in oxidizing ethanol. Required for clearance of cellular formaldehyde, a cytotoxic and carcinogenic metabolite that induces DNA damage. Also acts as a S-nitroso-glutathione reductase by catalyzing the NADH-dependent reduction of S-nitrosoglutathione, thereby regulating protein S-nitrosylation. The sequence is that of Alcohol dehydrogenase class-3 from Oryctolagus cuniculus (Rabbit).